The chain runs to 304 residues: Ribonuclease Z (304 aa).

7 residues coordinate Zn(2+): His-63, His-65, Asp-67, His-68, His-143, Asp-213, and His-271. The active-site Proton acceptor is Asp-67.

The protein belongs to the RNase Z family. Homodimer. It depends on Zn(2+) as a cofactor.

The enzyme catalyses Endonucleolytic cleavage of RNA, removing extra 3' nucleotides from tRNA precursor, generating 3' termini of tRNAs. A 3'-hydroxy group is left at the tRNA terminus and a 5'-phosphoryl group is left at the trailer molecule.. Functionally, zinc phosphodiesterase, which displays some tRNA 3'-processing endonuclease activity. Probably involved in tRNA maturation, by removing a 3'-trailer from precursor tRNA. The sequence is that of Ribonuclease Z from Parabacteroides distasonis (strain ATCC 8503 / DSM 20701 / CIP 104284 / JCM 5825 / NCTC 11152).